The sequence spans 593 residues: Meiotic recombination protein REC8 homolog (593 aa).

Serine 149 carries the phosphoserine modification. The residue at position 164 (threonine 164) is a Phosphothreonine. Residue serine 192 is modified to Phosphoserine. Disordered stretches follow at residues 247 to 282 (QRRA…AQVE), 317 to 344 (ELRL…RRGR), and 422 to 444 (PQLE…RRKT). The segment covering 255–265 (DESKEEPRALE) has biased composition (basic and acidic residues). A compositionally biased stretch (basic and acidic residues) spans 432-444 (EERVADKEERRKT).

This sequence belongs to the rad21 family. Interacts (phosphorylated and unphosphorylated form) with SMC3. Interacts with SYCP3. Interacts (phosphorylated and unphosphorylated form) with SMC1B. Does not interact with SMC1A. Interacts with RAD51. Forms a complex with EWSR1, PRDM9, SYCP3 and SYCP1; complex formation is dependent of phosphorylated form of REC8 and requires PRDM9 bound to hotspot DNA; EWSR1 joins PRDM9 with the chromosomal axis through REC8. Post-translationally, phosphorylated.

Its subcellular location is the nucleus. The protein localises to the chromosome. It localises to the centromere. Required during meiosis for separation of sister chromatids and homologous chromosomes. Proteolytic cleavage of REC8 on chromosome arms by separin during anaphase I allows for homologous chromosome separation in meiosis I and cleavage of REC8 on centromeres during anaphase II allows for sister chromatid separation in meiosis II. This is Meiotic recombination protein REC8 homolog from Rattus norvegicus (Rat).